The sequence spans 485 residues: Membrane-bound lytic murein transglycosylase F (485 aa).

The N-terminal stretch at 1–29 is a signal peptide; the sequence is MFAHTALRQRCAKWLLATGLFLLLGACVE. The segment at 30–267 is non-LT domain; that stretch reads KPSTLERVKE…RLKDRYYGHV (238 aa). Residues 268-485 are LT domain; that stretch reads DVLGYVGAYT…DKPADKSSPM (218 aa). Glu314 is a catalytic residue. Residues 465–485 are disordered; sequence EGNLHVPGVNKDKPADKSSPM. Over residues 474–485 the composition is skewed to basic and acidic residues; it reads NKDKPADKSSPM.

It in the N-terminal section; belongs to the bacterial solute-binding protein 3 family. The protein in the C-terminal section; belongs to the transglycosylase Slt family.

The protein resides in the cell outer membrane. It catalyses the reaction Exolytic cleavage of the (1-&gt;4)-beta-glycosidic linkage between N-acetylmuramic acid (MurNAc) and N-acetylglucosamine (GlcNAc) residues in peptidoglycan, from either the reducing or the non-reducing ends of the peptidoglycan chains, with concomitant formation of a 1,6-anhydrobond in the MurNAc residue.. In terms of biological role, murein-degrading enzyme that degrades murein glycan strands and insoluble, high-molecular weight murein sacculi, with the concomitant formation of a 1,6-anhydromuramoyl product. Lytic transglycosylases (LTs) play an integral role in the metabolism of the peptidoglycan (PG) sacculus. Their lytic action creates space within the PG sacculus to allow for its expansion as well as for the insertion of various structures such as secretion systems and flagella. This chain is Membrane-bound lytic murein transglycosylase F, found in Pseudomonas putida (strain ATCC 47054 / DSM 6125 / CFBP 8728 / NCIMB 11950 / KT2440).